A 231-amino-acid polypeptide reads, in one-letter code: NADH-ubiquinone oxidoreductase chain 4 (231 aa).

6 consecutive transmembrane segments (helical) span residues 1–21 (PIAGSMVLAAILLKLGGYGII), 34–54 (TFLPFLVLALWGAILANLTCL), 61–80 (SLIAYSSISHMGLVVAAIII), 84–106 (WGLSGAMALMIAHGFTSSALFCL), 118–138 (ILILTRGFHNILPMATTWWLL), and 156–178 (LLIMSTLFNWCPTTIILLGLSML).

It belongs to the complex I subunit 4 family.

The protein resides in the mitochondrion membrane. The enzyme catalyses a ubiquinone + NADH + 5 H(+)(in) = a ubiquinol + NAD(+) + 4 H(+)(out). Its function is as follows. Core subunit of the mitochondrial membrane respiratory chain NADH dehydrogenase (Complex I) that is believed to belong to the minimal assembly required for catalysis. Complex I functions in the transfer of electrons from NADH to the respiratory chain. The immediate electron acceptor for the enzyme is believed to be ubiquinone. The chain is NADH-ubiquinone oxidoreductase chain 4 (MT-ND4) from Trimeresurus albolabris (White-lipped pit viper).